The primary structure comprises 191 residues: Outer membrane lipoprotein DolP (191 aa).

A signal peptide spans 1 to 18 (MKALSPIAVLISALLLQG). The N-palmitoyl cysteine moiety is linked to residue C19. C19 is lipidated: S-diacylglycerol cysteine. 2 consecutive BON domains span residues 46–115 (DDGT…RQGQ) and 124–191 (NDTW…TFIK).

The protein belongs to the lipoprotein DolP family.

The protein localises to the cell outer membrane. In terms of biological role, plays an important role in maintaining outer membrane integrity. This Escherichia coli O157:H7 protein is Outer membrane lipoprotein DolP.